Reading from the N-terminus, the 578-residue chain is 2-hydroxyacyl-CoA lyase 1 (578 aa).

At Ser4 the chain carries Phosphoserine. Residue Glu60 coordinates thiamine diphosphate. Lys351, Lys358, and Lys365 each carry N6-succinyllysine. Residues 401–486 form a thiamine pyrophosphate binding region; the sequence is TMDIGRTVLQ…LLVVNNNGIY (86 aa). Mg(2+)-binding residues include Asp455 and Asn482. The Microbody targeting signal motif lies at 576 to 578; the sequence is SNM.

Belongs to the TPP enzyme family. Homotetramer. Requires Mg(2+) as cofactor. Thiamine diphosphate is required as a cofactor. In terms of tissue distribution, widely expressed.

The protein localises to the peroxisome. The enzyme catalyses a 2-hydroxy-3-methyl fatty acyl-CoA = a 2-methyl-branched fatty aldehyde + formyl-CoA. It catalyses the reaction an (R)-2-hydroxy-long-chain-fatty acyl-CoA = a long-chain fatty aldehyde + formyl-CoA. The catalysed reaction is 2-hydroxy-3-methylhexadecanoyl-CoA = 2-methylpentadecanal + formyl-CoA. It carries out the reaction 2-hydroxyoctadecanoyl-CoA = heptadecanal + formyl-CoA. The enzyme catalyses 2-hydroxyphytanoyl-CoA = 2,6,10,14-tetramethylpentadecanal + formyl-CoA. The protein operates within lipid metabolism; fatty acid metabolism. Peroxisomal 2-OH acyl-CoA lyase involved in the cleavage (C1 removal) reaction in the fatty acid alpha-oxydation in a thiamine pyrophosphate (TPP)-dependent manner. Involved in the degradation of 3-methyl-branched fatty acids like phytanic acid and the shortening of 2-hydroxy long-chain fatty acids. Plays a significant role in the biosynthesis of heptadecanal in the liver. This chain is 2-hydroxyacyl-CoA lyase 1, found in Homo sapiens (Human).